The sequence spans 61 residues: Small ribosomal subunit protein uS14 (61 aa).

Zn(2+)-binding residues include Cys-24, Cys-27, Cys-40, and Cys-43.

The protein belongs to the universal ribosomal protein uS14 family. Zinc-binding uS14 subfamily. Part of the 30S ribosomal subunit. Contacts proteins S3 and S10. Zn(2+) is required as a cofactor.

Its function is as follows. Binds 16S rRNA, required for the assembly of 30S particles and may also be responsible for determining the conformation of the 16S rRNA at the A site. The protein is Small ribosomal subunit protein uS14 of Mycobacterium sp. (strain JLS).